Here is a 368-residue protein sequence, read N- to C-terminus: DNA replication and repair protein RecF (368 aa).

30-37 provides a ligand contact to ATP; that stretch reads GNNAQGKT.

Belongs to the RecF family.

It is found in the cytoplasm. The RecF protein is involved in DNA metabolism; it is required for DNA replication and normal SOS inducibility. RecF binds preferentially to single-stranded, linear DNA. It also seems to bind ATP. This chain is DNA replication and repair protein RecF, found in Streptococcus pyogenes serotype M12 (strain MGAS2096).